The following is a 61-amino-acid chain: Small ribosomal subunit protein uS14 (61 aa).

Positions 24, 27, 40, and 43 each coordinate Zn(2+).

It belongs to the universal ribosomal protein uS14 family. Zinc-binding uS14 subfamily. As to quaternary structure, part of the 30S ribosomal subunit. Contacts proteins S3 and S10. Zn(2+) is required as a cofactor.

Functionally, binds 16S rRNA, required for the assembly of 30S particles and may also be responsible for determining the conformation of the 16S rRNA at the A site. This Streptococcus thermophilus (strain ATCC BAA-491 / LMD-9) protein is Small ribosomal subunit protein uS14.